A 673-amino-acid polypeptide reads, in one-letter code: DNA topoisomerase 1 (673 aa).

Residues 1–134 (MVAEKPKAAA…ARRMKFSTLA (134 aa)) form the Toprim domain. Mg(2+) contacts are provided by Glu4 and Asp103. Residues 149–568 (DVEMIEAGMA…MSKKTISKLL (420 aa)) form the Topo IA-type catalytic domain. The interaction with DNA stretch occupies residues 189-194 (SAGRVQ). The active-site O-(5'-phospho-DNA)-tyrosine intermediate is Tyr311. Residues 352 to 374 (LRPVQGSKDDPAHPAIHPTGEKP) form a disordered region. The segment at 595-615 (CHLCGRKAVSAVSGYRLCSHH) adopts a C4-type zinc-finger fold.

This sequence belongs to the type IA topoisomerase family. In terms of assembly, monomer. Requires Mg(2+) as cofactor.

It catalyses the reaction ATP-independent breakage of single-stranded DNA, followed by passage and rejoining.. Releases the supercoiling and torsional tension of DNA, which is introduced during the DNA replication and transcription, by transiently cleaving and rejoining one strand of the DNA duplex. Introduces a single-strand break via transesterification at a target site in duplex DNA. The scissile phosphodiester is attacked by the catalytic tyrosine of the enzyme, resulting in the formation of a DNA-(5'-phosphotyrosyl)-enzyme intermediate and the expulsion of a 3'-OH DNA strand. The free DNA strand then undergoes passage around the unbroken strand, thus removing DNA supercoils. Finally, in the religation step, the DNA 3'-OH attacks the covalent intermediate to expel the active-site tyrosine and restore the DNA phosphodiester backbone. This is DNA topoisomerase 1 from Aeropyrum pernix (strain ATCC 700893 / DSM 11879 / JCM 9820 / NBRC 100138 / K1).